The sequence spans 201 residues: Large ribosomal subunit protein uL4 (201 aa).

A disordered region spans residues 45–72 (AQKTRAEVTGSGKKPWRQKGTGRARAGS).

Belongs to the universal ribosomal protein uL4 family. In terms of assembly, part of the 50S ribosomal subunit.

Its function is as follows. One of the primary rRNA binding proteins, this protein initially binds near the 5'-end of the 23S rRNA. It is important during the early stages of 50S assembly. It makes multiple contacts with different domains of the 23S rRNA in the assembled 50S subunit and ribosome. In terms of biological role, forms part of the polypeptide exit tunnel. This chain is Large ribosomal subunit protein uL4, found in Shewanella baltica (strain OS223).